Consider the following 240-residue polypeptide: Large ribosomal subunit protein uL2 (240 aa).

Polar residues predominate over residues 1–11 (MGKRLISQNRG). Disordered regions lie at residues 1-31 (MGKRLISQNRGRGTPKYRSPSHKRKGAVKYR) and 206-240 (GGGRHQHLGKPSSVSRHTSPGRKVGHIASRRTGRK). Basic residues-rich tracts occupy residues 13-28 (GTPKYRSPSHKRKGAV) and 224-240 (SPGRKVGHIASRRTGRK).

Belongs to the universal ribosomal protein uL2 family. In terms of assembly, part of the 50S ribosomal subunit. Forms a bridge to the 30S subunit in the 70S ribosome.

Its function is as follows. One of the primary rRNA binding proteins. Required for association of the 30S and 50S subunits to form the 70S ribosome, for tRNA binding and peptide bond formation. It has been suggested to have peptidyltransferase activity; this is somewhat controversial. Makes several contacts with the 16S rRNA in the 70S ribosome. The chain is Large ribosomal subunit protein uL2 from Methanococcus maripaludis (strain C6 / ATCC BAA-1332).